A 50-amino-acid polypeptide reads, in one-letter code: Small ribosomal subunit protein eS31 (50 aa).

Zn(2+) is bound by residues Cys22, Cys25, Cys40, and Cys43. The C4-type zinc-finger motif lies at 22 to 43 (CPRCGPGVFMADHGDRWACGKC).

This sequence belongs to the eukaryotic ribosomal protein eS31 family. Part of the 30S ribosomal subunit. Zn(2+) serves as cofactor.

This is Small ribosomal subunit protein eS31 from Pyrococcus furiosus (strain ATCC 43587 / DSM 3638 / JCM 8422 / Vc1).